A 263-amino-acid polypeptide reads, in one-letter code: Putative S-adenosyl-L-methionine-dependent methyltransferase Mkms_0098 (263 aa).

S-adenosyl-L-methionine contacts are provided by residues Asp121 and Glu150–Ser151.

Belongs to the UPF0677 family.

Exhibits S-adenosyl-L-methionine-dependent methyltransferase activity. This is Putative S-adenosyl-L-methionine-dependent methyltransferase Mkms_0098 from Mycobacterium sp. (strain KMS).